A 138-amino-acid polypeptide reads, in one-letter code: Putative pre-16S rRNA nuclease (138 aa).

It belongs to the YqgF nuclease family.

The protein resides in the cytoplasm. Could be a nuclease involved in processing of the 5'-end of pre-16S rRNA. This Salmonella dublin (strain CT_02021853) protein is Putative pre-16S rRNA nuclease.